The following is a 325-amino-acid chain: Necdin (325 aa).

2 disordered regions span residues 1–69 and 77–96; these read MSEQ…IEDV and AAEE…IPAP. Residues 102 to 301 enclose the MAGE domain; sequence LVQKAHELMW…QAWPSRYREA (200 aa).

As to quaternary structure, binds to the transactivation domains of E2F1 and p53. Binds also SV40 large T antigen and adenovirus E1A. Interacts with nucleobindin 1 and 2. As to expression, brain specific. Not detected in other tissues. Expressed in postmitotic neurons. In adult brain the highest expression is in hypothalamus. Highly expressed in thalamus and midbrain. Relatively low levels are in cerebral cortex, hippocampus, striatum, olfactory bulb, cerebellum, pons and spinal cord. Also detected in neurally differentiated embryonal carcinoma cells.

It localises to the cytoplasm. The protein localises to the nucleus. It is found in the nucleoplasm. Its subcellular location is the nucleus matrix. Its function is as follows. Growth suppressor that facilitates the entry of the cell into cell cycle arrest. Functionally similar to the retinoblastoma protein it binds to and represses the activity of cell-cycle-promoting proteins such as SV40 large T antigen, adenovirus E1A, and the transcription factor E2F. Necdin also interacts with p53 and works in an additive manner to inhibit cell growth. Also functions as a transcription factor and directly binds to specific guanosine-rich DNA sequences. The polypeptide is Necdin (Ndn) (Mus musculus (Mouse)).